The following is a 208-amino-acid chain: ATP-dependent Clp protease proteolytic subunit (208 aa).

Catalysis depends on Ser107, which acts as the Nucleophile. His132 is an active-site residue.

It belongs to the peptidase S14 family. In terms of assembly, fourteen ClpP subunits assemble into 2 heptameric rings which stack back to back to give a disk-like structure with a central cavity, resembling the structure of eukaryotic proteasomes.

It localises to the cytoplasm. It catalyses the reaction Hydrolysis of proteins to small peptides in the presence of ATP and magnesium. alpha-casein is the usual test substrate. In the absence of ATP, only oligopeptides shorter than five residues are hydrolyzed (such as succinyl-Leu-Tyr-|-NHMec, and Leu-Tyr-Leu-|-Tyr-Trp, in which cleavage of the -Tyr-|-Leu- and -Tyr-|-Trp bonds also occurs).. In terms of biological role, cleaves peptides in various proteins in a process that requires ATP hydrolysis. Has a chymotrypsin-like activity. Plays a major role in the degradation of misfolded proteins. In Methylobacterium radiotolerans (strain ATCC 27329 / DSM 1819 / JCM 2831 / NBRC 15690 / NCIMB 10815 / 0-1), this protein is ATP-dependent Clp protease proteolytic subunit.